Here is a 342-residue protein sequence, read N- to C-terminus: Galactose mutarotase (342 aa).

At Ser-14 the chain carries Phosphoserine. Residues Asn-81–Arg-82, His-107, His-176–Tyr-178, Asp-243, Gln-279, and Glu-307 contribute to the beta-D-galactose site. His-176 (proton donor) is an active-site residue. Glu-307 serves as the catalytic Proton acceptor.

Belongs to the aldose epimerase family. In terms of assembly, monomer.

Its subcellular location is the cytoplasm. It catalyses the reaction alpha-D-galactose = beta-D-galactose. The catalysed reaction is alpha-D-glucose = beta-D-glucose. It participates in carbohydrate metabolism; hexose metabolism. Its pathway is carbohydrate metabolism; galactose metabolism. Mutarotase that catalyzes the interconversion of beta-D-galactose and alpha-D-galactose during galactose metabolism. Beta-D-galactose is metabolized in the liver into glucose 1-phosphate, the primary metabolic fuel, by the action of four enzymes that constitute the Leloir pathway: GALM, GALK1 (galactokinase), GALT (galactose-1-phosphate uridylyltransferase) and GALE (UDP-galactose-4'-epimerase). Involved in the maintenance of the equilibrium between the beta- and alpha-anomers of galactose, therefore ensuring a sufficient supply of the alpha-anomer for GALK1. Also active on D-glucose although shows a preference for galactose over glucose. This chain is Galactose mutarotase, found in Mus musculus (Mouse).